The primary structure comprises 254 residues: uncharacterized protein (254 aa).

A run of 8 helical transmembrane segments spans residues 41–61 (VFVFIFFLLAATISFTQIKII), 64–84 (IFQAPAIGIKFLQLAPGEYFF), 91–111 (IYCGIVATTPFGVYQVILYIL), 125–145 (ILIGSIVLFIVGGIFAYFVLA), 146–166 (PAALNFLISYGADIVEPLWSF), 172–192 (FILLLLFSTGLAFEIPIIQLL), 204–224 (MLLAWRYIIIISTIIGAVLTP), and 232–252 (IIMSSAVLALYFSGVIILFLL).

Belongs to the TatC family.

The protein resides in the plastid. The protein localises to the chloroplast membrane. This is an uncharacterized protein from Porphyra purpurea (Red seaweed).